The sequence spans 442 residues: Adenylosuccinate synthetase (442 aa).

GTP is bound by residues 30–36 (GDEGKGK) and 58–60 (GHT). The active-site Proton acceptor is Asp-31. Positions 31 and 58 each coordinate Mg(2+). Residues 31-34 (DEGK), 56-59 (NAGH), Thr-148, Arg-162, Asn-241, Thr-256, and Arg-320 each bind IMP. His-59 serves as the catalytic Proton donor. 316–322 (TTTGRRR) contributes to the substrate binding site. GTP is bound by residues Arg-322, 348–350 (KLD), and 430–432 (GVG).

Belongs to the adenylosuccinate synthetase family. In terms of assembly, homodimer. Requires Mg(2+) as cofactor.

Its subcellular location is the cytoplasm. The catalysed reaction is IMP + L-aspartate + GTP = N(6)-(1,2-dicarboxyethyl)-AMP + GDP + phosphate + 2 H(+). It participates in purine metabolism; AMP biosynthesis via de novo pathway; AMP from IMP: step 1/2. In terms of biological role, plays an important role in the de novo pathway and in the salvage pathway of purine nucleotide biosynthesis. Catalyzes the first committed step in the biosynthesis of AMP from IMP. This is Adenylosuccinate synthetase from Trichoplax adhaerens (Trichoplax reptans).